The chain runs to 1664 residues: DNA-directed RNA polymerase I subunit RPA190 (1664 aa).

Zn(2+) is bound by residues Cys-62, Cys-65, Cys-72, His-75, Cys-102, Cys-105, Cys-233, and Cys-236. The segment at 280-310 (QAKKLDGSNEASANDEESFDVGRNPTTRPKT) is disordered. The Mg(2+) site is built by Asp-627, Asp-629, and Asp-631. Residue Ser-889 is modified to Phosphoserine. A bridging helix region spans residues 992 to 1004 (PQEYYFHCMAGRE). Positions 1343–1423 (DIGVAVPRLQ…DSDSEDEDVD (81 aa)) are disordered. Residues 1393–1414 (ETMREAEKSSDEEGIDSDKESD) are compositionally biased toward basic and acidic residues. Position 1636 is a phosphoserine (Ser-1636).

The protein belongs to the RNA polymerase beta' chain family. In terms of assembly, component of the RNA polymerase I (Pol I) complex consisting of 14 subunits: RPA135, RPA190, RPC40, RPA14, RPB5, RPO26, RPA43, RPB8, RPA12, RPB10, RPC19, RPC10, RPA49 and RPA34. The complex is composed of a horseshoe-shaped core containing ten subunits (RPA135, RPA190, RPB5, RPO26, RPB8, RPB10, RPC10, RPA12, RPC19 and RPC40) where RPA135 and RPA190 form the DNA-binding cleft. Outside of the core, RPA14 and RPA43 form the stalk that mediates interactions with transcription initiation factors and newly synthesized RNA.

It localises to the nucleus. Its subcellular location is the nucleolus. It carries out the reaction RNA(n) + a ribonucleoside 5'-triphosphate = RNA(n+1) + diphosphate. DNA-dependent RNA polymerases catalyze the transcription of DNA into RNA using the four ribonucleoside triphosphates as substrates. Component of RNA polymerase I (Pol I) which synthesizes ribosomal RNA precursors. Besides, RNA polymerase I has intrinsic RNA cleavage activity. RPA190 and RPA135 both contribute to the polymerase catalytic activity and together form the Pol I active center. In addition, subunit RPA12 contributes a catalytic zinc ribbon that is required for RNA cleavage by Pol I. A single stranded DNA template strand of the promoter is positioned within the central active site cleft of Pol I. A bridging helix emanates from RPA190 and crosses the cleft near the catalytic site and is thought to promote translocation of Pol I by acting as a ratchet that moves the RNA-DNA hybrid through the active site by switching from straight to bent conformations at each step of nucleotide addition. The sequence is that of DNA-directed RNA polymerase I subunit RPA190 (RPA190) from Saccharomyces cerevisiae (strain ATCC 204508 / S288c) (Baker's yeast).